The primary structure comprises 435 residues: NADH-quinone oxidoreductase subunit D (435 aa).

This sequence belongs to the complex I 49 kDa subunit family. NDH-1 is composed of 14 different subunits. Subunits NuoB, C, D, E, F, and G constitute the peripheral sector of the complex.

The protein localises to the cell membrane. The catalysed reaction is a quinone + NADH + 5 H(+)(in) = a quinol + NAD(+) + 4 H(+)(out). Functionally, NDH-1 shuttles electrons from NADH, via FMN and iron-sulfur (Fe-S) centers, to quinones in the respiratory chain. The immediate electron acceptor for the enzyme in this species is believed to be ubiquinone. Couples the redox reaction to proton translocation (for every two electrons transferred, four hydrogen ions are translocated across the cytoplasmic membrane), and thus conserves the redox energy in a proton gradient. The polypeptide is NADH-quinone oxidoreductase subunit D (Stenotrophomonas maltophilia (strain K279a)).